A 144-amino-acid polypeptide reads, in one-letter code: Putative sugar phosphate isomerase RC0402 (144 aa).

Histidine 12 serves as a coordination point for substrate. Histidine 101 (proton donor) is an active-site residue. Substrate is bound at residue arginine 135.

Belongs to the LacAB/RpiB family.

The chain is Putative sugar phosphate isomerase RC0402 from Rickettsia conorii (strain ATCC VR-613 / Malish 7).